A 352-amino-acid polypeptide reads, in one-letter code: Anthranilate phosphoribosyltransferase (352 aa).

Residues Gly-83, 86–87 (GD), Thr-91, 93–96 (NIST), 111–119 (KHGGRSVSS), and Ala-123 contribute to the 5-phospho-alpha-D-ribose 1-diphosphate site. Position 83 (Gly-83) interacts with anthranilate. Mg(2+) is bound at residue Ser-95. Arg-169 is a binding site for anthranilate. Mg(2+) contacts are provided by Asp-228 and Glu-229.

Belongs to the anthranilate phosphoribosyltransferase family. In terms of assembly, homodimer. It depends on Mg(2+) as a cofactor.

The enzyme catalyses N-(5-phospho-beta-D-ribosyl)anthranilate + diphosphate = 5-phospho-alpha-D-ribose 1-diphosphate + anthranilate. It participates in amino-acid biosynthesis; L-tryptophan biosynthesis; L-tryptophan from chorismate: step 2/5. Catalyzes the transfer of the phosphoribosyl group of 5-phosphorylribose-1-pyrophosphate (PRPP) to anthranilate to yield N-(5'-phosphoribosyl)-anthranilate (PRA). This chain is Anthranilate phosphoribosyltransferase, found in Neisseria meningitidis serogroup A / serotype 4A (strain DSM 15465 / Z2491).